A 470-amino-acid polypeptide reads, in one-letter code: ATP synthase subunit beta (470 aa).

148-155 (GGAGVGKT) is a binding site for ATP.

Belongs to the ATPase alpha/beta chains family. In terms of assembly, F-type ATPases have 2 components, CF(1) - the catalytic core - and CF(0) - the membrane proton channel. CF(1) has five subunits: alpha(3), beta(3), gamma(1), delta(1), epsilon(1). CF(0) has three main subunits: a(1), b(2) and c(9-12). The alpha and beta chains form an alternating ring which encloses part of the gamma chain. CF(1) is attached to CF(0) by a central stalk formed by the gamma and epsilon chains, while a peripheral stalk is formed by the delta and b chains.

The protein localises to the cell inner membrane. The catalysed reaction is ATP + H2O + 4 H(+)(in) = ADP + phosphate + 5 H(+)(out). In terms of biological role, produces ATP from ADP in the presence of a proton gradient across the membrane. The catalytic sites are hosted primarily by the beta subunits. In Saccharophagus degradans (strain 2-40 / ATCC 43961 / DSM 17024), this protein is ATP synthase subunit beta.